Here is a 323-residue protein sequence, read N- to C-terminus: ADP-L-glycero-D-manno-heptose-6-epimerase (323 aa).

NADP(+) contacts are provided by residues F10–I11, D31–N32, K38, R53, M75–S79, and N92. Y143 acts as the Proton acceptor in catalysis. Residue K147 participates in NADP(+) binding. N170 is a binding site for substrate. NADP(+) contacts are provided by V171 and K179. The active-site Proton acceptor is the K179. Residues D181, K188, F202 to C205, R216, and Y281 contribute to the substrate site.

This sequence belongs to the NAD(P)-dependent epimerase/dehydratase family. HldD subfamily. Homopentamer. Requires NADP(+) as cofactor.

The enzyme catalyses ADP-D-glycero-beta-D-manno-heptose = ADP-L-glycero-beta-D-manno-heptose. Its pathway is nucleotide-sugar biosynthesis; ADP-L-glycero-beta-D-manno-heptose biosynthesis; ADP-L-glycero-beta-D-manno-heptose from D-glycero-beta-D-manno-heptose 7-phosphate: step 4/4. Its function is as follows. Catalyzes the interconversion between ADP-D-glycero-beta-D-manno-heptose and ADP-L-glycero-beta-D-manno-heptose via an epimerization at carbon 6 of the heptose. In Nitratidesulfovibrio vulgaris (strain ATCC 29579 / DSM 644 / CCUG 34227 / NCIMB 8303 / VKM B-1760 / Hildenborough) (Desulfovibrio vulgaris), this protein is ADP-L-glycero-D-manno-heptose-6-epimerase.